The primary structure comprises 308 residues: tRNA pseudouridine synthase B (308 aa).

Residue Asp47 is the Nucleophile of the active site.

This sequence belongs to the pseudouridine synthase TruB family. Type 1 subfamily.

The catalysed reaction is uridine(55) in tRNA = pseudouridine(55) in tRNA. Its function is as follows. Responsible for synthesis of pseudouridine from uracil-55 in the psi GC loop of transfer RNAs. The chain is tRNA pseudouridine synthase B from Xanthomonas campestris pv. campestris (strain 8004).